Consider the following 452-residue polypeptide: MPFIPHTEEDIQAMLASIGANSIDELFDEIPPALKTGSLKRVPPGLSEMEISRLMLERAEQDGRYLNFIGAGAYEHHIPAAVWQIATRGEFYSSYTPYQAEASQGTLQLLYEYQTMMASLTGMDVSNASMYDGASALAEAALMAVRSHRTSRRILIPQTVHPVYRSVVRAIVKNQGIEVVEVPYDKLSGQTSLDGLKNFGSEEFAALVIPQPNFFGVLEDVDTLTDWAQSRDAFAIAVVNPMALAMLTPPGEWGEKGADIAVGEGQPLGIPLSSGGPYFGFMACKQPLVRQMPGRIIGRTTDQEGSDGFVLTLQAREQHIRRSKATSNICTNQGLMVTAATIYLALLGPEGLRRTAAQSHANTAALLEKLEKLKGVKRVFSGPVFHEAVISLPRPSASVLQALEARRILGGLNLKEYYPELGDAVLVCATETKTSGDMENYVTQLGEVIRNS.

The protein belongs to the GcvP family. N-terminal subunit subfamily. In terms of assembly, the glycine cleavage system is composed of four proteins: P, T, L and H. In this organism, the P 'protein' is a heterodimer of two subunits.

It carries out the reaction N(6)-[(R)-lipoyl]-L-lysyl-[glycine-cleavage complex H protein] + glycine + H(+) = N(6)-[(R)-S(8)-aminomethyldihydrolipoyl]-L-lysyl-[glycine-cleavage complex H protein] + CO2. Functionally, the glycine cleavage system catalyzes the degradation of glycine. The P protein binds the alpha-amino group of glycine through its pyridoxal phosphate cofactor; CO(2) is released and the remaining methylamine moiety is then transferred to the lipoamide cofactor of the H protein. The polypeptide is Probable glycine dehydrogenase (decarboxylating) subunit 1 (Nitrosospira multiformis (strain ATCC 25196 / NCIMB 11849 / C 71)).